We begin with the raw amino-acid sequence, 424 residues long: Myb family transcription factor RLI1 (424 aa).

The interval 144–165 (RPQKRDSGERTPLPPPSQQQHQ) is disordered. Residues 238–298 (APSKTRIRWT…HLQKYRIAKY (61 aa)) form the HTH myb-type domain. Residues 269–294 (PKGILKLMNSDGLTIYHIKSHLQKYR) constitute a DNA-binding region (H-T-H motif). Residues 326–391 (MQITEALRVQ…ELDDVVAFAA (66 aa)) adopt a coiled-coil conformation. Positions 342 to 347 (LHEQLE) match the LHEQLE motif.

The protein belongs to the MYB-CC family. As to quaternary structure, interacts with SPX1 and SPX2 in the nucleus; these interactions prevent binding to the promoters of target genes, thus regulating negatively leaf inclination in response to phosphate (Pi) starvation. Homodimer. Interacts with PHR2 in the nucleus. Mostly expressed in roots and leaves blades and, to a lower extent, in leaves sheaths, culms and panicles. Localized in leaves lamina joints. As to expression, expressed equally in shoots and roots. In terms of tissue distribution, mostly expressed in shoots and, to a lower extent, in roots.

Its subcellular location is the nucleus. Its function is as follows. Transcription factor binding to specific DNA sequences of target genes promoters, such as the motif R1BS 5'-NAKATNCN-3' and the motif P1BS 5'-GNATATNC-3' to trigger their expression. Nitrate-induced component involved in modulating phosphate (Pi) response and homeostasis together with PHR2; activates directly the expression of Pi starvation-induced (PSI) genes upon nitrate disponibility, thus triggering the nitrate-induced phosphate response (NIPR) promoting Pi uptake activity. Binds preferentially to the P1BS motif 5'-GNATATNC-3' in target genes promoters. Functionally, binds preferentially to the R1BS motif 5'-NAKATNCN-3' in target genes promoters, including several genes involved in the plant hormone signal transduction pathway. Involved in the shoot architecture; positively regulates leaf inclination by affecting lamina joint cell elongation via the direct promotion of ILI4/BU1 and BC1 genes expression, especially in response to phosphate (Pi) availability. Regulates both brassinolide (BL) biosynthesis and signaling by directly activating BL-biosynthesis and signaling genes. This chain is Myb family transcription factor RLI1, found in Oryza sativa subsp. japonica (Rice).